The following is a 142-amino-acid chain: Large ribosomal subunit protein uL13 (142 aa).

Belongs to the universal ribosomal protein uL13 family. As to quaternary structure, part of the 50S ribosomal subunit.

Its function is as follows. This protein is one of the early assembly proteins of the 50S ribosomal subunit, although it is not seen to bind rRNA by itself. It is important during the early stages of 50S assembly. This is Large ribosomal subunit protein uL13 from Syntrophus aciditrophicus (strain SB).